The primary structure comprises 234 residues: Sugar fermentation stimulation protein homolog (234 aa).

Belongs to the SfsA family.

This chain is Sugar fermentation stimulation protein homolog, found in Shewanella baltica (strain OS223).